A 92-amino-acid chain; its full sequence is DNA-directed RNA polymerase subunit omega (92 aa).

This sequence belongs to the RNA polymerase subunit omega family. In terms of assembly, the RNAP catalytic core consists of 2 alpha, 1 beta, 1 beta' and 1 omega subunit. When a sigma factor is associated with the core the holoenzyme is formed, which can initiate transcription.

The enzyme catalyses RNA(n) + a ribonucleoside 5'-triphosphate = RNA(n+1) + diphosphate. Functionally, promotes RNA polymerase assembly. Latches the N- and C-terminal regions of the beta' subunit thereby facilitating its interaction with the beta and alpha subunits. In Shewanella sp. (strain ANA-3), this protein is DNA-directed RNA polymerase subunit omega.